The following is a 406-amino-acid chain: Anthranilate 1,2-dioxygenase system ferredoxin--NAD(+) reductase component (406 aa).

Pro-5–Glu-37 is an FAD binding site. Gly-152–Ala-161 serves as a coordination point for NAD(+).

It belongs to the FAD-dependent oxidoreductase family. Part of a multicomponent enzyme system composed of a reductase (AndAa), a ferredoxin (AndAb) and a two-subunit oxygenase component (AndAc and AndAd). FAD is required as a cofactor.

It carries out the reaction 2 reduced [2Fe-2S]-[ferredoxin] + NAD(+) + H(+) = 2 oxidized [2Fe-2S]-[ferredoxin] + NADH. It participates in aromatic compound metabolism; anthranilate degradation via hydroxylation; catechol from anthranilate: step 1/1. Functionally, part of the multicomponent anthranilate dioxygenase, that converts anthranilate to catechol. Probably transfers electrons from ferredoxin (AndAb) to NADH. This chain is Anthranilate 1,2-dioxygenase system ferredoxin--NAD(+) reductase component, found in Burkholderia cepacia (Pseudomonas cepacia).